The primary structure comprises 526 residues: Zinc finger protein 69 homolog (526 aa).

An SCAN box domain is found at 1-39 (MPQQLLITLPTEASTWVKLQHPKKAVEGAPLWEDVTKMF). One can recognise a KRAB domain in the interval 76–147 (LTFKDISIDF…EKEGPGDPSS (72 aa)). 9 consecutive C2H2-type zinc fingers follow at residues 271 to 293 (YECN…MRIH), 299 to 321 (FRCK…QRIH), 327 to 349 (FECE…HRTH), 355 to 377 (YVCD…LRTH), 383 to 405 (FTCN…IRIH), 411 to 433 (YACT…QRIH), 439 to 461 (YKCK…KTVH), 467 to 489 (YECN…QRHH), and 495 to 517 (YECN…HEIH).

The protein belongs to the krueppel C2H2-type zinc-finger protein family. As to expression, expressed in visceral and subcutaneous adipose tissue.

Its subcellular location is the nucleus. In terms of biological role, putative transcription factor that appears to regulate lipid metabolism. The sequence is that of Zinc finger protein 69 homolog (ZFP69) from Homo sapiens (Human).